Consider the following 229-residue polypeptide: Lipoprotein-releasing system ATP-binding protein LolD (229 aa).

In terms of domain architecture, ABC transporter spans His-9 to Val-228. Gly-42–Ser-49 provides a ligand contact to ATP.

Belongs to the ABC transporter superfamily. Lipoprotein translocase (TC 3.A.1.125) family. As to quaternary structure, the complex is composed of two ATP-binding proteins (LolD) and two transmembrane proteins (LolC and LolE).

It is found in the cell inner membrane. Its function is as follows. Part of the ABC transporter complex LolCDE involved in the translocation of mature outer membrane-directed lipoproteins, from the inner membrane to the periplasmic chaperone, LolA. Responsible for the formation of the LolA-lipoprotein complex in an ATP-dependent manner. The sequence is that of Lipoprotein-releasing system ATP-binding protein LolD from Photobacterium profundum (strain SS9).